The primary structure comprises 117 residues: Protein Wnt-6 (117 aa).

Residue S1 is the site of O-palmitoleoyl serine; by PORCN attachment. The cysteines at positions 83 and 98 are disulfide-linked. N84 is a glycosylation site (N-linked (GlcNAc...) asparagine).

It belongs to the Wnt family. In terms of processing, palmitoleoylation is required for efficient binding to frizzled receptors. Depalmitoleoylation leads to Wnt signaling pathway inhibition.

The protein localises to the secreted. It localises to the extracellular space. Its subcellular location is the extracellular matrix. In terms of biological role, ligand for members of the frizzled family of seven transmembrane receptors. Probable developmental protein. May be a signaling molecule which affects the development of discrete regions of tissues. Is likely to signal over only few cell diameters. The chain is Protein Wnt-6 (WNT-6) from Evasterias troschelii (Mottled sea star).